A 437-amino-acid chain; its full sequence is Photosystem II stability/assembly factor HCF136, chloroplastic (437 aa).

The protein belongs to the Ycf48 family.

The protein localises to the plastid. It localises to the chloroplast thylakoid membrane. Functionally, essential for photosystem II (PSII) biogenesis; required for assembly of an early intermediate in PSII assembly that includes D2 (psbD) and cytochrome b559. This is Photosystem II stability/assembly factor HCF136, chloroplastic from Cyanidioschyzon merolae (strain NIES-3377 / 10D) (Unicellular red alga).